A 342-amino-acid polypeptide reads, in one-letter code: Ubiquitin fusion degradation protein 1 homolog (342 aa).

2 disordered regions span residues 245 to 276 and 318 to 342; these read FGGAGRRLDGKKKPSSSVSLSDGTGVSTSNAA and EKEASKAGQPSNVFRGGNRTLRGAR. Over residues 259-275 the composition is skewed to polar residues; the sequence is SSSVSLSDGTGVSTSNA.

Belongs to the UFD1 family. In terms of assembly, forms a complex composed of ubxn-3, ufd-1, npl-4.1 and cdc-48.1; within the complex interacts with cdc-48.1. Interacts with cdc-48.2. Interacts with npl-4.1 and/or npl-4.2.

The protein localises to the cytoplasm. It is found in the nucleus. In terms of biological role, functions at a post-ubiquitination step in the ubiquitin fusion degradation (UFD) pathway. In association with npl-4.1 and/or npl-4.2 and ATPase cdc-48.1 and/or cdc-48.2, involved in the cytoplasmic elimination of misfolded proteins exported from the ER. This pathway, known as ERAD, prevents the activation of the unfolded protein response (UPR) caused by the accumulation of misfolded proteins in the ER. During S phase and in association with npl-4.1 and/or npl-4.2, cdc-48.1 and/or cdc-48.2 and ubxn-3, ensures the degradation of DNA licensing factor cdt-1 after the initiation of DNA replication and thus the disassembly of the DNA replication CMG helicase complex by promoting the dissociation from chromatin of several of its components including cdc-45 and sld-5. Regulates ubxn-3 nuclear localization during S phase. This chain is Ubiquitin fusion degradation protein 1 homolog (ufd-1), found in Caenorhabditis elegans.